The chain runs to 49 residues: Large ribosomal subunit protein bL33A (49 aa).

The protein belongs to the bacterial ribosomal protein bL33 family.

This is Large ribosomal subunit protein bL33A from Staphylococcus aureus (strain Mu3 / ATCC 700698).